The sequence spans 207 residues: Fibroblast growth factor 18 (207 aa).

Residues 1 to 27 (MYSAPSACTCLCLHFLLLCFQVQVLAA) form the signal peptide. N39 carries an N-linked (GlcNAc...) asparagine glycan. Residues C109 and C127 are joined by a disulfide bond. N137 is a glycosylation site (N-linked (GlcNAc...) asparagine).

It belongs to the heparin-binding growth factors family. In terms of assembly, interacts with FGFR3 and FGFR4.

It localises to the secreted. Plays an important role in the regulation of cell proliferation, cell differentiation and cell migration. Required for normal ossification and bone development. Stimulates hepatic and intestinal proliferation. This chain is Fibroblast growth factor 18 (Fgf18), found in Mus musculus (Mouse).